We begin with the raw amino-acid sequence, 158 residues long: 2-C-methyl-D-erythritol 2,4-cyclodiphosphate synthase (158 aa).

The a divalent metal cation site is built by Asp8 and His10. 4-CDP-2-C-methyl-D-erythritol 2-phosphate contacts are provided by residues 8–10 (DVH) and 34–35 (HS). His42 is an a divalent metal cation binding site. 4-CDP-2-C-methyl-D-erythritol 2-phosphate is bound by residues 56-58 (DIG), 61-65 (FPDTD), 100-106 (AQVPKMA), 132-135 (TTTE), Phe139, and Arg142.

Belongs to the IspF family. As to quaternary structure, homotrimer. It depends on a divalent metal cation as a cofactor.

It catalyses the reaction 4-CDP-2-C-methyl-D-erythritol 2-phosphate = 2-C-methyl-D-erythritol 2,4-cyclic diphosphate + CMP. It participates in isoprenoid biosynthesis; isopentenyl diphosphate biosynthesis via DXP pathway; isopentenyl diphosphate from 1-deoxy-D-xylulose 5-phosphate: step 4/6. Its function is as follows. Involved in the biosynthesis of isopentenyl diphosphate (IPP) and dimethylallyl diphosphate (DMAPP), two major building blocks of isoprenoid compounds. Catalyzes the conversion of 4-diphosphocytidyl-2-C-methyl-D-erythritol 2-phosphate (CDP-ME2P) to 2-C-methyl-D-erythritol 2,4-cyclodiphosphate (ME-CPP) with a corresponding release of cytidine 5-monophosphate (CMP). In Sodalis glossinidius (strain morsitans), this protein is 2-C-methyl-D-erythritol 2,4-cyclodiphosphate synthase.